The primary structure comprises 235 residues: Carboxy-S-adenosyl-L-methionine synthase (235 aa).

S-adenosyl-L-methionine contacts are provided by residues Tyr-35, 60–62 (GCS), 83–84 (DN), Asn-124, and Arg-191.

The protein belongs to the class I-like SAM-binding methyltransferase superfamily. Cx-SAM synthase family. As to quaternary structure, homodimer.

It catalyses the reaction prephenate + S-adenosyl-L-methionine = carboxy-S-adenosyl-L-methionine + 3-phenylpyruvate + H2O. Functionally, catalyzes the conversion of S-adenosyl-L-methionine (SAM) to carboxy-S-adenosyl-L-methionine (Cx-SAM). The polypeptide is Carboxy-S-adenosyl-L-methionine synthase (Campylobacter jejuni subsp. doylei (strain ATCC BAA-1458 / RM4099 / 269.97)).